The chain runs to 1481 residues: DNA-directed RNA polymerase subunit beta'' (1481 aa).

Residues cysteine 217, cysteine 291, cysteine 298, and cysteine 301 each coordinate Zn(2+).

It belongs to the RNA polymerase beta' chain family. RpoC2 subfamily. In terms of assembly, in plastids the minimal PEP RNA polymerase catalytic core is composed of four subunits: alpha, beta, beta', and beta''. When a (nuclear-encoded) sigma factor is associated with the core the holoenzyme is formed, which can initiate transcription. Zn(2+) is required as a cofactor.

The protein localises to the plastid. The protein resides in the chloroplast. It catalyses the reaction RNA(n) + a ribonucleoside 5'-triphosphate = RNA(n+1) + diphosphate. In terms of biological role, DNA-dependent RNA polymerase catalyzes the transcription of DNA into RNA using the four ribonucleoside triphosphates as substrates. In Trieres chinensis (Marine centric diatom), this protein is DNA-directed RNA polymerase subunit beta''.